We begin with the raw amino-acid sequence, 239 residues long: Fatty acid metabolism regulator protein (239 aa).

The HTH gntR-type domain maps to 6-74 (QSPAGFAEEY…HGKPTKVNNF (69 aa)). Residues 34-53 (ERELSELIGVTRTTLREVLQ) constitute a DNA-binding region (H-T-H motif).

In terms of assembly, homodimer.

The protein resides in the cytoplasm. Its function is as follows. Multifunctional regulator of fatty acid metabolism. Represses transcription of at least eight genes required for fatty acid transport and beta-oxidation including fadA, fadB, fadD, fadL and fadE. Activates transcription of at least three genes required for unsaturated fatty acid biosynthesis: fabA, fabB and iclR, the gene encoding the transcriptional regulator of the aceBAK operon encoding the glyoxylate shunt enzymes. Binding of FadR is specifically inhibited by long chain fatty acyl-CoA compounds. This chain is Fatty acid metabolism regulator protein, found in Salmonella typhimurium (strain LT2 / SGSC1412 / ATCC 700720).